The sequence spans 87 residues: Diazepam-binding inhibitor-like 5 (87 aa).

Residues 2–87 (SQVEFEMACA…VEELKKNETC (86 aa)) enclose the ACB domain. An acyl-CoA is bound by residues 29–33 (YSFYK), K55, and Y74.

It belongs to the ACBP family. As to expression, testis.

The protein localises to the cytoplasm. May be involved in the energy metabolism of the mature sperm. The chain is Diazepam-binding inhibitor-like 5 (Dbil5) from Rattus norvegicus (Rat).